A 210-amino-acid polypeptide reads, in one-letter code: Protein GrpE (210 aa).

The segment covering methionine 1–serine 12 has biased composition (basic and acidic residues). Disordered stretches follow at residues methionine 1–glycine 26 and isoleucine 191–alanine 210.

The protein belongs to the GrpE family. As to quaternary structure, homodimer.

The protein resides in the cytoplasm. Its function is as follows. Participates actively in the response to hyperosmotic and heat shock by preventing the aggregation of stress-denatured proteins, in association with DnaK and GrpE. It is the nucleotide exchange factor for DnaK and may function as a thermosensor. Unfolded proteins bind initially to DnaJ; upon interaction with the DnaJ-bound protein, DnaK hydrolyzes its bound ATP, resulting in the formation of a stable complex. GrpE releases ADP from DnaK; ATP binding to DnaK triggers the release of the substrate protein, thus completing the reaction cycle. Several rounds of ATP-dependent interactions between DnaJ, DnaK and GrpE are required for fully efficient folding. The polypeptide is Protein GrpE (Mesorhizobium japonicum (strain LMG 29417 / CECT 9101 / MAFF 303099) (Mesorhizobium loti (strain MAFF 303099))).